Here is a 203-residue protein sequence, read N- to C-terminus: Holliday junction branch migration complex subunit RuvA (203 aa).

Residues 1 to 63 (MIGQLSGKVD…EEHIHLYGFL (63 aa)) are domain I. Residues 64–142 (TLEEKIFFNL…KISSGSAIIK (79 aa)) are domain II. Positions 143-149 (ESLNIKN) are flexible linker. A domain III region spans residues 150 to 203 (ITPVASNEVIKALVNLGFSRFEAQNAVQGIITQNPEISIDELIKTALKNRNSNF).

This sequence belongs to the RuvA family. In terms of assembly, homotetramer. Forms an RuvA(8)-RuvB(12)-Holliday junction (HJ) complex. HJ DNA is sandwiched between 2 RuvA tetramers; dsDNA enters through RuvA and exits via RuvB. An RuvB hexamer assembles on each DNA strand where it exits the tetramer. Each RuvB hexamer is contacted by two RuvA subunits (via domain III) on 2 adjacent RuvB subunits; this complex drives branch migration. In the full resolvosome a probable DNA-RuvA(4)-RuvB(12)-RuvC(2) complex forms which resolves the HJ.

The protein resides in the cytoplasm. Its function is as follows. The RuvA-RuvB-RuvC complex processes Holliday junction (HJ) DNA during genetic recombination and DNA repair, while the RuvA-RuvB complex plays an important role in the rescue of blocked DNA replication forks via replication fork reversal (RFR). RuvA specifically binds to HJ cruciform DNA, conferring on it an open structure. The RuvB hexamer acts as an ATP-dependent pump, pulling dsDNA into and through the RuvAB complex. HJ branch migration allows RuvC to scan DNA until it finds its consensus sequence, where it cleaves and resolves the cruciform DNA. The chain is Holliday junction branch migration complex subunit RuvA from Rickettsia conorii (strain ATCC VR-613 / Malish 7).